Here is a 387-residue protein sequence, read N- to C-terminus: GTPase Obg (387 aa).

One can recognise an Obg domain in the interval 1–159 (MKFVDEVEIR…RSLKLELLLL (159 aa)). The OBG-type G domain occupies 160-333 (ADVGLLGLPN…LTQKVMTFIE (174 aa)). GTP-binding positions include 166-173 (GLPNAGKS), 191-195 (FTTLV), 213-216 (DIPG), 283-286 (NKLD), and 314-316 (SAF). The Mg(2+) site is built by Ser173 and Thr193. Residues 361 to 387 (AAHSQDDDLDDDDWDEDDYDVEVEYRQ) form a disordered region. A compositionally biased stretch (acidic residues) spans 367 to 387 (DDLDDDDWDEDDYDVEVEYRQ).

This sequence belongs to the TRAFAC class OBG-HflX-like GTPase superfamily. OBG GTPase family. In terms of assembly, monomer. The cofactor is Mg(2+).

The protein localises to the cytoplasm. Functionally, an essential GTPase which binds GTP, GDP and possibly (p)ppGpp with moderate affinity, with high nucleotide exchange rates and a fairly low GTP hydrolysis rate. Plays a role in control of the cell cycle, stress response, ribosome biogenesis and in those bacteria that undergo differentiation, in morphogenesis control. The chain is GTPase Obg from Colwellia psychrerythraea (strain 34H / ATCC BAA-681) (Vibrio psychroerythus).